We begin with the raw amino-acid sequence, 332 residues long: DNA-directed RNA polymerase subunit alpha (332 aa).

The segment at 1–226 (MLIAQRPTLT…ELFGLCRELN (226 aa)) is alpha N-terminal domain (alpha-NTD). Positions 245-332 (PEMNIPIEDL…GGTFFSPEDE (88 aa)) are alpha C-terminal domain (alpha-CTD).

Belongs to the RNA polymerase alpha chain family. As to quaternary structure, homodimer. The RNAP catalytic core consists of 2 alpha, 1 beta, 1 beta' and 1 omega subunit. When a sigma factor is associated with the core the holoenzyme is formed, which can initiate transcription.

The enzyme catalyses RNA(n) + a ribonucleoside 5'-triphosphate = RNA(n+1) + diphosphate. Its function is as follows. DNA-dependent RNA polymerase catalyzes the transcription of DNA into RNA using the four ribonucleoside triphosphates as substrates. The sequence is that of DNA-directed RNA polymerase subunit alpha from Bifidobacterium adolescentis (strain ATCC 15703 / DSM 20083 / NCTC 11814 / E194a).